The chain runs to 1374 residues: MSSSFFNPSFAFSSHFDPDGAPLSELSWPSSLAVVAVSFSGLFAVIVLMLACLCCKKGGIGFKEFENAEGDEYAADLAQGSPATAAQNGPDVYVLPLTEVSLPMAKQPGRSVQLLKSTDVGRHSLLYLKEIGRGWFGKVFLGEVNSGISSAQVVVKELQASASVQEQMQFLEEVQPYRALKHSNLLQCLAQCAEVTPYLLVMEFCPLGDLKGYLRSCRVAESMAPDPRTLQRMACEVACGVLHLHRNNFVHSDLALRNCLLTADLTVKIGDYGLAHCKYREDYFVTADQLWVPLRWIAPELVDEVHSNLLVVDQTKSGNVWSLGVTIWELFELGTQPYPQHSDQQVLAYTVREQQLKLPKPQLQLTLSDRWYEVMQFCWLQPEQRPTAEEVHLLLSYLCAKGATEAEEEFERRWRSLRPGGGGVGPGPGAAGPMLGGVVELAAASSFPLLEQFAGDGFHADGDDVLTVTETSRGLNFEYKWEAGRGAEAFPATLSPGRTARLQELCAPDGAPPGVVPVLSAHSPSLGSEYFIRLEEAAPAAGHDPDCAGCAPSPPATADQDDDSDGSTAASLAMEPLLGHGPPVDVPWGRGDHYPRRSLARDPLCPSRSPSPSAGPLSLAEGGAEDADWGVAAFCPAFFEDPLGTSPLGSSGAPPLPLTGEDELEEVGARRAAQRGHWRSNVSANNNSGSRCPESWDPVSAGGHAEGCPSPKQTPRASPEPGYPGEPLLGLQAASAQEPGCCPGLPHLCSAQGLAPAPCLVTPSWTETASSGGDHPQAEPKLATEAEGTTGPRLPLPSVPSPSQEGAPLPSEEASAPDAPDALPDSPTPATGGEVSAIKLASALNGSSSSPEVEAPSSEDEDTAEATSGIFTDTSSDGLQARRPDVVPAFRSLQKQVGTPDSLDSLDIPSSASDGGYEVFSPSATGPSGGQPRALDSGYDTENYESPEFVLKEAQEGCEPQAFAELASEGEGPGPETRLSTSLSGLNEKNPYRDSAYFSDLEAEAEATSGPEKKCGGDRAPGPELGLPSTGQPSEQVCLRPGVSGEAQGSGPGEVLPPLLQLEGSSPEPSTCPSGLVPEPPEPQGPAKVRPGPSPSCSQFFLLTPVPLRSEGNSSEFQGPPGLLSGPAPQKRMGGPGTPRAPLRLALPGLPAALEGRPEEEEEDSEDSDESDEELRCYSVQEPSEDSEEEAPAVPVVVAESQSARNLRSLLKMPSLLSETFCEDLERKKKAVSFFDDVTVYLFDQESPTRELGEPFPGAKESPPTFLRGSPGSPSAPNRPQQADGSPNGSTAEEGGGFAWDDDFPLMTAKAAFAMALDPAAPAPAAPTPTPAPFSRFTVSPAPTSRFSITHVSDSDAESKRGPEAGAGGESKEA.

The helical transmembrane segment at 32–52 (LAVVAVSFSGLFAVIVLMLAC) threads the bilayer. In terms of domain architecture, Protein kinase spans 125 to 395 (LLYLKEIGRG…PTAEEVHLLL (271 aa)). Residues 131–139 (IGRGWFGKV) and Lys-156 each bind ATP. Catalysis depends on Asp-253, which acts as the Proton acceptor. Phosphoserine is present on Ser-495. 5 disordered regions span residues 542 to 622 (GHDP…LAEG), 667 to 731 (VGAR…LLGL), 765 to 1195 (WTET…PAVP), 1245 to 1302 (QESP…AWDD), and 1320 to 1374 (AAPA…SKEA). Positions 606 to 620 (PSRSPSPSAGPLSLA) are enriched in low complexity. The span at 680–690 (SNVSANNNSGS) shows a compositional bias: polar residues. 3 stretches are compositionally biased toward low complexity: residues 719–731 (PEPG…LLGL), 801–831 (SPSQ…TPAT), and 847–856 (SSSSPEVEAP). The span at 865 to 878 (EATSGIFTDTSSDG) shows a compositional bias: polar residues. Over residues 900 to 914 (PDSLDSLDIPSSASD) the composition is skewed to low complexity. Polar residues predominate over residues 978–987 (RLSTSLSGLN). Residue Ser-1029 is modified to Phosphoserine. Positions 1063–1073 (EGSSPEPSTCP) are enriched in polar residues. Residues 1138–1155 (TPRAPLRLALPGLPAALE) show a composition bias toward low complexity. Over residues 1158–1173 (PEEEEEDSEDSDESDE) the composition is skewed to acidic residues. 5 positions are modified to phosphoserine: Ser-1168, Ser-1171, Ser-1184, Ser-1187, and Ser-1262. Residues 1272–1291 (GSPSAPNRPQQADGSPNGST) are compositionally biased toward polar residues. The span at 1321-1332 (APAPAAPTPTPA) shows a compositional bias: pro residues. Residues 1337–1352 (FTVSPAPTSRFSITHV) show a composition bias toward polar residues. Basic and acidic residues predominate over residues 1353 to 1363 (SDSDAESKRGP). Over residues 1365-1374 (AGAGGESKEA) the composition is skewed to gly residues.

Belongs to the protein kinase superfamily. Tyr protein kinase family. In terms of assembly, interacts with CDK5. Post-translationally, autophosphorylated. Phosphorylated by CDK5. In terms of tissue distribution, expressed in brain.

The protein resides in the membrane. It is found in the cytoplasm. It localises to the perinuclear region. The catalysed reaction is L-seryl-[protein] + ATP = O-phospho-L-seryl-[protein] + ADP + H(+). The enzyme catalyses L-threonyl-[protein] + ATP = O-phospho-L-threonyl-[protein] + ADP + H(+). Functionally, may be involved in neuronal differentiation. The sequence is that of Serine/threonine-protein kinase LMTK1 (AATK) from Homo sapiens (Human).